Consider the following 332-residue polypeptide: 4-hydroxy-3-methylbut-2-enyl diphosphate reductase (332 aa).

Cysteine 34 is a [4Fe-4S] cluster binding site. The (2E)-4-hydroxy-3-methylbut-2-enyl diphosphate site is built by histidine 63 and histidine 96. Histidine 63 and histidine 96 together coordinate dimethylallyl diphosphate. Positions 63 and 96 each coordinate isopentenyl diphosphate. [4Fe-4S] cluster is bound at residue cysteine 118. A (2E)-4-hydroxy-3-methylbut-2-enyl diphosphate-binding site is contributed by histidine 146. Histidine 146 lines the dimethylallyl diphosphate pocket. Histidine 146 contributes to the isopentenyl diphosphate binding site. Glutamate 148 acts as the Proton donor in catalysis. Threonine 186 provides a ligand contact to (2E)-4-hydroxy-3-methylbut-2-enyl diphosphate. Cysteine 216 lines the [4Fe-4S] cluster pocket. Positions 244, 245, 246, and 289 each coordinate (2E)-4-hydroxy-3-methylbut-2-enyl diphosphate. Dimethylallyl diphosphate-binding residues include serine 244, serine 245, asparagine 246, and serine 289. The isopentenyl diphosphate site is built by serine 244, serine 245, asparagine 246, and serine 289.

The protein belongs to the IspH family. Requires [4Fe-4S] cluster as cofactor.

It carries out the reaction isopentenyl diphosphate + 2 oxidized [2Fe-2S]-[ferredoxin] + H2O = (2E)-4-hydroxy-3-methylbut-2-enyl diphosphate + 2 reduced [2Fe-2S]-[ferredoxin] + 2 H(+). The enzyme catalyses dimethylallyl diphosphate + 2 oxidized [2Fe-2S]-[ferredoxin] + H2O = (2E)-4-hydroxy-3-methylbut-2-enyl diphosphate + 2 reduced [2Fe-2S]-[ferredoxin] + 2 H(+). Its pathway is isoprenoid biosynthesis; dimethylallyl diphosphate biosynthesis; dimethylallyl diphosphate from (2E)-4-hydroxy-3-methylbutenyl diphosphate: step 1/1. It participates in isoprenoid biosynthesis; isopentenyl diphosphate biosynthesis via DXP pathway; isopentenyl diphosphate from 1-deoxy-D-xylulose 5-phosphate: step 6/6. Functionally, catalyzes the conversion of 1-hydroxy-2-methyl-2-(E)-butenyl 4-diphosphate (HMBPP) into a mixture of isopentenyl diphosphate (IPP) and dimethylallyl diphosphate (DMAPP). Acts in the terminal step of the DOXP/MEP pathway for isoprenoid precursor biosynthesis. This Mycolicibacterium paratuberculosis (strain ATCC BAA-968 / K-10) (Mycobacterium paratuberculosis) protein is 4-hydroxy-3-methylbut-2-enyl diphosphate reductase.